Consider the following 426-residue polypeptide: MIDQRLLRENPNLISEGLKSRGMDVDLGPLQKFCKDLKELEEKRNSLQAQGNSIGKEVGQKIKQGLPHDSEEISNLRVKGNQIKKQVGIIEEEEKSISNKLNEQILCLPNLPEKNSLEGKNEKDNKELRRWGEPISGNTLKEHWEIANQLNLWDSERSSVIAKSRFVTLFKHAAKLERSLINFMLDLHIKKGYLEVLPPALVNTASLTGSGQLPKFAEESFRCADDDLWLTPTAEVPITSLHRGEIIPRDLLPLRYVAYSPCFRREAGSYGRDTRGLIRLHQFNKVELYWFSTPERSEDALEQITSDAESVLQELELPYRVIQLCTGDLGFSAKKTYDLEVWLPGANTFREISSCSNCGDFQARRSSIRTKDNNKKNILLHTLNGSGLAIGRTMAAILENGQQSDGSINLPKALIPYFGSNKLKPE.

233–235 (TAE) provides a ligand contact to L-serine. 264-266 (RRE) provides a ligand contact to ATP. Glu287 serves as a coordination point for L-serine. 351-354 (EISS) is an ATP binding site. Position 386 (Ser386) interacts with L-serine.

This sequence belongs to the class-II aminoacyl-tRNA synthetase family. Type-1 seryl-tRNA synthetase subfamily. As to quaternary structure, homodimer. The tRNA molecule binds across the dimer.

It localises to the cytoplasm. The catalysed reaction is tRNA(Ser) + L-serine + ATP = L-seryl-tRNA(Ser) + AMP + diphosphate + H(+). The enzyme catalyses tRNA(Sec) + L-serine + ATP = L-seryl-tRNA(Sec) + AMP + diphosphate + H(+). The protein operates within aminoacyl-tRNA biosynthesis; selenocysteinyl-tRNA(Sec) biosynthesis; L-seryl-tRNA(Sec) from L-serine and tRNA(Sec): step 1/1. In terms of biological role, catalyzes the attachment of serine to tRNA(Ser). Is also able to aminoacylate tRNA(Sec) with serine, to form the misacylated tRNA L-seryl-tRNA(Sec), which will be further converted into selenocysteinyl-tRNA(Sec). The polypeptide is Serine--tRNA ligase (Prochlorococcus marinus (strain NATL2A)).